The chain runs to 200 residues: ATP-dependent Clp protease proteolytic subunit 2 (200 aa).

Ser99 serves as the catalytic Nucleophile. His124 is an active-site residue.

It belongs to the peptidase S14 family. In terms of assembly, fourteen ClpP subunits assemble into 2 heptameric rings which stack back to back to give a disk-like structure with a central cavity, resembling the structure of eukaryotic proteasomes.

The protein resides in the cytoplasm. It carries out the reaction Hydrolysis of proteins to small peptides in the presence of ATP and magnesium. alpha-casein is the usual test substrate. In the absence of ATP, only oligopeptides shorter than five residues are hydrolyzed (such as succinyl-Leu-Tyr-|-NHMec, and Leu-Tyr-Leu-|-Tyr-Trp, in which cleavage of the -Tyr-|-Leu- and -Tyr-|-Trp bonds also occurs).. Cleaves peptides in various proteins in a process that requires ATP hydrolysis. Has a chymotrypsin-like activity. Plays a major role in the degradation of misfolded proteins. The chain is ATP-dependent Clp protease proteolytic subunit 2 from Treponema denticola (strain ATCC 35405 / DSM 14222 / CIP 103919 / JCM 8153 / KCTC 15104).